Consider the following 66-residue polypeptide: Large ribosomal subunit protein bL31 (66 aa).

Cys16, Cys18, Cys36, and Cys39 together coordinate Zn(2+).

It belongs to the bacterial ribosomal protein bL31 family. Type A subfamily. As to quaternary structure, part of the 50S ribosomal subunit. The cofactor is Zn(2+).

In terms of biological role, binds the 23S rRNA. In Campylobacter jejuni subsp. jejuni serotype O:6 (strain 81116 / NCTC 11828), this protein is Large ribosomal subunit protein bL31.